The primary structure comprises 275 residues: Ribosomal protein L11 methyltransferase (275 aa).

S-adenosyl-L-methionine-binding residues include threonine 123, glycine 146, aspartate 167, and asparagine 208.

Belongs to the methyltransferase superfamily. PrmA family.

The protein resides in the cytoplasm. The catalysed reaction is L-lysyl-[protein] + 3 S-adenosyl-L-methionine = N(6),N(6),N(6)-trimethyl-L-lysyl-[protein] + 3 S-adenosyl-L-homocysteine + 3 H(+). In terms of biological role, methylates ribosomal protein L11. The protein is Ribosomal protein L11 methyltransferase of Campylobacter fetus subsp. fetus (strain 82-40).